Reading from the N-terminus, the 156-residue chain is Movement protein P17 (156 aa).

The homodimerization stretch occupies residues 38 to 54 (AEDVEEEAIAAQEELEF). Residues 57-156 (DEAQARHSCL…RAAPKLIKRG (100 aa)) are RNA-binding. Residues Ser71, Ser79, Ser137, and Ser140 each carry the phosphoserine modification. The segment at 106-156 (ASYFSSSARPLPPPPAPSLMSWTPIAKYHPSSPTSTSSKLRRAAPKLIKRG) is disordered. Over residues 144-156 (KLRRAAPKLIKRG) the composition is skewed to basic residues.

Belongs to the polerovirus movement protein family. In terms of assembly, homodimer. Post-translationally, expressed as a nonphosphorylated 20kDa form and a phosphorylated 22kDa form. Phosphorylated by a host PKC-related kinase. Serine phosphorylation is required for plamodesma targeting.

Its subcellular location is the host cell junction. It localises to the host plasmodesma. The protein resides in the host chloroplast envelope. The protein localises to the host Golgi apparatus. It is found in the host mitochondrion outer membrane. In terms of biological role, together with movement protein P3a, facilitates long-distance movement of virions in host. Transports viral genome to neighboring plant cells directly through plasmosdesmata, without any budding. The movement protein allows efficient cell to cell propagation, by bypassing the host cell wall barrier. Binds ssRNA. The polypeptide is Movement protein P17 (Solanum tuberosum (Potato)).